Consider the following 385-residue polypeptide: Succinate--CoA ligase [ADP-forming] subunit beta (385 aa).

The 236-residue stretch at 9-244 (KEVLRKYGVS…LDEEDPKEIE (236 aa)) folds into the ATP-grasp domain. Residues Lys46, 53–55 (GRG), Glu99, Cys102, and Glu107 contribute to the ATP site. Residues Asn199 and Asp213 each coordinate Mg(2+). Substrate is bound by residues Asn264 and 321-323 (GIM).

Belongs to the succinate/malate CoA ligase beta subunit family. Heterotetramer of two alpha and two beta subunits. Mg(2+) is required as a cofactor.

The catalysed reaction is succinate + ATP + CoA = succinyl-CoA + ADP + phosphate. It carries out the reaction GTP + succinate + CoA = succinyl-CoA + GDP + phosphate. Its pathway is carbohydrate metabolism; tricarboxylic acid cycle; succinate from succinyl-CoA (ligase route): step 1/1. Its function is as follows. Succinyl-CoA synthetase functions in the citric acid cycle (TCA), coupling the hydrolysis of succinyl-CoA to the synthesis of either ATP or GTP and thus represents the only step of substrate-level phosphorylation in the TCA. The beta subunit provides nucleotide specificity of the enzyme and binds the substrate succinate, while the binding sites for coenzyme A and phosphate are found in the alpha subunit. The polypeptide is Succinate--CoA ligase [ADP-forming] subunit beta (Bacillus velezensis (strain DSM 23117 / BGSC 10A6 / LMG 26770 / FZB42) (Bacillus amyloliquefaciens subsp. plantarum)).